We begin with the raw amino-acid sequence, 371 residues long: Cytochrome b (371 aa).

4 helical membrane-spanning segments follow: residues 32–52, 76–98, 113–133, and 179–199; these read VGFS…CLAW, FVIR…VHIF, VWAV…IGYV, and LHVL…MHLF. 2 residues coordinate heme b: His82 and His96. Heme b-binding residues include His183 and His197. His202 is a binding site for a ubiquinone. 4 helical membrane-spanning segments follow: residues 227–247, 296–316, 329–349, and 350–370; these read FYLR…YFIF, LMVI…LWFV, LILF…ILAY, and PIWM…VCRL.

This sequence belongs to the cytochrome b family. As to quaternary structure, the main subunits of complex b-c1 are: cytochrome b, cytochrome c1 and the Rieske protein. It depends on heme b as a cofactor.

The protein resides in the mitochondrion inner membrane. Its function is as follows. Component of the ubiquinol-cytochrome c reductase complex (complex III or cytochrome b-c1 complex) that is part of the mitochondrial respiratory chain. The b-c1 complex mediates electron transfer from ubiquinol to cytochrome c. Contributes to the generation of a proton gradient across the mitochondrial membrane that is then used for ATP synthesis. In Leishmania tarentolae (Sauroleishmania tarentolae), this protein is Cytochrome b (MT-CYB).